The sequence spans 198 residues: Nucleoside triphosphate pyrophosphatase (198 aa).

Catalysis depends on aspartate 72, which acts as the Proton acceptor.

This sequence belongs to the Maf family. A divalent metal cation is required as a cofactor.

Its subcellular location is the cytoplasm. It carries out the reaction a ribonucleoside 5'-triphosphate + H2O = a ribonucleoside 5'-phosphate + diphosphate + H(+). It catalyses the reaction a 2'-deoxyribonucleoside 5'-triphosphate + H2O = a 2'-deoxyribonucleoside 5'-phosphate + diphosphate + H(+). Nucleoside triphosphate pyrophosphatase. May have a dual role in cell division arrest and in preventing the incorporation of modified nucleotides into cellular nucleic acids. This chain is Nucleoside triphosphate pyrophosphatase, found in Acinetobacter baylyi (strain ATCC 33305 / BD413 / ADP1).